Consider the following 305-residue polypeptide: Type II secretion system protein C (305 aa).

Over 1–29 (MEFKQLPPLAAWPRLLSQNTLRWQKPISE) the chain is Cytoplasmic. A helical transmembrane segment spans residues 30 to 50 (GLTLLLLVASAWTLGKMVWVV). Residues 51–305 (SAEQTPVPTW…GQQHDVYIQF (255 aa)) lie on the Periplasmic side of the membrane.

This sequence belongs to the GSP C family.

The protein resides in the cell inner membrane. Involved in a type II secretion system (T2SS, formerly general secretion pathway, GSP) for the export of proteins. Required for secretion of cholera toxin through the outer membrane. The protein is Type II secretion system protein C (epsC) of Vibrio cholerae serotype O1 (strain ATCC 39315 / El Tor Inaba N16961).